A 757-amino-acid chain; its full sequence is MRDMRASSPETTSAVKCPFNKTAVEGTHNKDWWPNQLRVDLLHQHSNKSNPLGETFDYAKVFQKLDYAALKRDLHALMTDSQDWWPADFGHYGGLFIRMAWHSAGTYRIGDGRGGAGRGQQRFAPLNSWPDNVSLDKARRLLWPIKKKYGQQISWADLIVLAGNVALESMGFKTFGFAGGRVDTWEPDQDVYWGREMTWLGGDVRYGAVSEGVHHPDEHSGAKEKASKNSDSRVLENPLAAVQMGLIYVNPEGPDGRPDPLASARDIRETFARMAMNDEETVALIAGGHTFGKTHGAAPADNVGPEPEAGELEQQGLGWHNRFGSGKAGDTITSGLEVTWTKTPTQWSNDFFEHLFGYEWELTKSPAGAYQWVAKDAAATIPHAHDPSKKLLPMMLTSDLALRFDPVYEKISRHFHAHPDQFADAFARAWFKLTHRDMGPRVRYLGPEVPAEELIWQDPVPKVSHVLVDAQDLLALKHKISASGLGISQLVSTAWASASTFRGSDKRGGANGGRLCLAPQNQWEVNQPQQLSVVLETLRRVQTEFNAQAGDKRISLADLIVLAGGVGVEQAAKRVGIVVEVPFVPGRTDALQEQTDVSSFAPLEPFADGFRNYVKGDEVVPSEHLLIDRAQLLTLTAPEMTVLIGGLRVLGANVGGVKHGVFTDRLGTLSNDFFINLLDMGTEWAPVSKERHVFEGRDRRTGVLKWTGTRVDLVFGSNALLRALAEVYAAVDAQEKFVRDFVAAWSKVMHLDRFDLV.

Residues 101–248 constitute a cross-link (tryptophyl-tyrosyl-methioninium (Trp-Tyr) (with M-274)); that stretch reads WHSAGTYRIG…LAAVQMGLIY (148 aa). The active-site Proton acceptor is the His-102. Residues 210–231 are disordered; it reads SEGVHHPDEHSGAKEKASKNSD. Basic and acidic residues predominate over residues 212–231; it reads GVHHPDEHSGAKEKASKNSD. A cross-link (tryptophyl-tyrosyl-methioninium (Tyr-Met) (with W-101)) is located at residues 248-274; sequence YVNPEGPDGRPDPLASARDIRETFARM. His-289 contributes to the heme b binding site. The disordered stretch occupies residues 293 to 312; it reads KTHGAAPADNVGPEPEAGEL.

Belongs to the peroxidase family. Peroxidase/catalase subfamily. In terms of assembly, homodimer or homotetramer. Heme b is required as a cofactor. In terms of processing, formation of the three residue Trp-Tyr-Met cross-link is important for the catalase, but not the peroxidase activity of the enzyme.

It carries out the reaction H2O2 + AH2 = A + 2 H2O. The enzyme catalyses 2 H2O2 = O2 + 2 H2O. Functionally, bifunctional enzyme with both catalase and broad-spectrum peroxidase activity. The sequence is that of Catalase-peroxidase from Xylella fastidiosa (strain M12).